The chain runs to 316 residues: Serpentine receptor class delta-45 (316 aa).

The next 7 helical transmembrane spans lie at valine 8–isoleucine 28, isoleucine 42–isoleucine 62, tyrosine 91–leucine 111, valine 128–leucine 148, isoleucine 184–leucine 204, leucine 234–alanine 254, and phenylalanine 266–valine 286.

The protein belongs to the nematode receptor-like protein srd family.

It is found in the membrane. In Caenorhabditis elegans, this protein is Serpentine receptor class delta-45 (srd-45).